The following is an 891-amino-acid chain: Aconitate hydratase A (891 aa).

[4Fe-4S] cluster is bound by residues Cys435, Cys501, and Cys504.

Belongs to the aconitase/IPM isomerase family. In terms of assembly, monomer. [4Fe-4S] cluster serves as cofactor.

The enzyme catalyses citrate = D-threo-isocitrate. Its pathway is carbohydrate metabolism; tricarboxylic acid cycle; isocitrate from oxaloacetate: step 2/2. Catalyzes the reversible isomerization of citrate to isocitrate via cis-aconitate. The apo form of AcnA functions as a RNA-binding regulatory protein which plays a role as a maintenance or survival enzyme during nutritional or oxidative stress. During oxidative stress inactive AcnA apo-enzyme without iron sulfur clusters binds the acnA mRNA 3' UTRs (untranslated regions), stabilizes acnA mRNA and increases AcnA synthesis, thus mediating a post-transcriptional positive autoregulatory switch. AcnA also enhances the stability of the sodA transcript. The sequence is that of Aconitate hydratase A from Escherichia coli (strain K12).